The following is a 397-amino-acid chain: Elongation factor Tu (397 aa).

A tr-type G domain is found at 10–206; that stretch reads KPHVNIGTIG…AVDQNIPEPQ (197 aa). Positions 19–26 are G1; that stretch reads GHIDHGKT. Residue 19 to 26 coordinates GTP; it reads GHIDHGKT. T26 contributes to the Mg(2+) binding site. The interval 62–66 is G2; sequence GITIS. The G3 stretch occupies residues 83 to 86; it reads DCPG. GTP-binding positions include 83–87 and 138–141; these read DCPGH and NKSD. A G4 region spans residues 138–141; it reads NKSD. Positions 176 to 178 are G5; it reads SAL.

This sequence belongs to the TRAFAC class translation factor GTPase superfamily. Classic translation factor GTPase family. EF-Tu/EF-1A subfamily. As to quaternary structure, monomer.

The protein resides in the cytoplasm. It carries out the reaction GTP + H2O = GDP + phosphate + H(+). GTP hydrolase that promotes the GTP-dependent binding of aminoacyl-tRNA to the A-site of ribosomes during protein biosynthesis. In Thermobifida fusca (strain YX), this protein is Elongation factor Tu.